The primary structure comprises 239 residues: Type III pantothenate kinase (239 aa).

An ATP-binding site is contributed by 6 to 13 (DAGNTRLK). Substrate is bound by residues Tyr-87 and 94–97 (GADR). Asp-96 (proton acceptor) is an active-site residue. ATP is bound at residue Thr-119. Ser-169 is a binding site for substrate.

This sequence belongs to the type III pantothenate kinase family. Homodimer. NH4(+) is required as a cofactor. It depends on K(+) as a cofactor.

The protein resides in the cytoplasm. The catalysed reaction is (R)-pantothenate + ATP = (R)-4'-phosphopantothenate + ADP + H(+). It functions in the pathway cofactor biosynthesis; coenzyme A biosynthesis; CoA from (R)-pantothenate: step 1/5. In terms of biological role, catalyzes the phosphorylation of pantothenate (Pan), the first step in CoA biosynthesis. The chain is Type III pantothenate kinase from Laribacter hongkongensis (strain HLHK9).